A 968-amino-acid polypeptide reads, in one-letter code: Translation initiation factor IF-2 (968 aa).

Residues 51–76 are compositionally biased toward low complexity; the sequence is PAAGASKSEAPAAAPKAPASPAATRP. The segment at 51–369 is disordered; sequence PAAGASKSEA…GVSVPRGDGN (319 aa). Pro residues predominate over residues 77–87; that stretch reads APAPGPAAPKA. Residues 93 to 102 are compositionally biased toward low complexity; sequence EAPAAASAPS. A compositionally biased stretch (pro residues) spans 103-112; the sequence is APAPAAPAPA. Composition is skewed to low complexity over residues 113–122, 128–170, and 239–254; these read APAAAASAPS, APST…GNNP, and GARP…PGAR. Over residues 281–336 the composition is skewed to gly residues; it reads GRPGGGGRGPGRPGGAPGTGGAPGAGGGAPAGGGFGKGGRGRGGTQGAFGKGGAGR. Residues 337–346 are compositionally biased toward basic residues; sequence GKQRKSKRAK. Residues 461–632 form the tr-type G domain; it reads ARPPVVTVMG…AVLLTADAAL (172 aa). The tract at residues 470–477 is G1; sequence GHVDHGKT. 470-477 is a GTP binding site; that stretch reads GHVDHGKT. A G2 region spans residues 495-499; sequence GITQH. Positions 520 to 523 are G3; it reads DTPG. Residues 520-524 and 574-577 each bind GTP; these read DTPGH and NKID. Residues 574–577 are G4; the sequence is NKID. Positions 610-612 are G5; it reads SAR.

Belongs to the TRAFAC class translation factor GTPase superfamily. Classic translation factor GTPase family. IF-2 subfamily.

The protein resides in the cytoplasm. In terms of biological role, one of the essential components for the initiation of protein synthesis. Protects formylmethionyl-tRNA from spontaneous hydrolysis and promotes its binding to the 30S ribosomal subunits. Also involved in the hydrolysis of GTP during the formation of the 70S ribosomal complex. The chain is Translation initiation factor IF-2 from Arthrobacter sp. (strain FB24).